The chain runs to 114 residues: Large ribosomal subunit protein P1 (114 aa).

The segment at 55–114 (EEAAAAPAAAPAASGSDDEAAADDGDDDEEADADEAAEAEDAGDDDDEEPSGEGLGDLFG) is disordered. The segment covering 56–69 (EAAAAPAAAPAASG) has biased composition (low complexity). Residues 70 to 105 (SDDEAAADDGDDDEEADADEAAEAEDAGDDDDEEPS) show a composition bias toward acidic residues.

This sequence belongs to the eukaryotic ribosomal protein P1/P2 family. Part of the 50S ribosomal subunit. Homodimer, it forms part of the ribosomal stalk which helps the ribosome interact with GTP-bound translation factors. Forms a heptameric uL10/P0(P1)2(P1)2(P1)2 complex, where uL10/P0 forms an elongated spine to which the P1 dimers bind in a sequential fashion.

Forms part of the ribosomal stalk, playing a central role in the interaction of the ribosome with GTP-bound translation factors. This is Large ribosomal subunit protein P1 from Halobacterium salinarum (strain ATCC 700922 / JCM 11081 / NRC-1) (Halobacterium halobium).